The primary structure comprises 308 residues: Cytochrome b (308 aa).

A run of 4 helical transmembrane segments spans residues 1 to 21, 45 to 66, 81 to 101, and 146 to 166; these read FGSL…LLAT, WLIR…YLHI, WNTG…GYVL, and FFAL…IHFT. Residue His-65 participates in heme b binding. His-150 and His-164 together coordinate heme b. His-169 is an a ubiquinone binding site. Helical transmembrane passes span 194–214, 256–276, and 288–308; these read VKDI…ALFS, LGGV…PFLH, and LSQF…WVGS.

Belongs to the cytochrome b family. In terms of assembly, the cytochrome bc1 complex contains 11 subunits: 3 respiratory subunits (MT-CYB, CYC1 and UQCRFS1), 2 core proteins (UQCRC1 and UQCRC2) and 6 low-molecular weight proteins (UQCRH/QCR6, UQCRB/QCR7, UQCRQ/QCR8, UQCR10/QCR9, UQCR11/QCR10 and a cleavage product of UQCRFS1). This cytochrome bc1 complex then forms a dimer. The cofactor is heme b.

Its subcellular location is the mitochondrion inner membrane. Component of the ubiquinol-cytochrome c reductase complex (complex III or cytochrome b-c1 complex) that is part of the mitochondrial respiratory chain. The b-c1 complex mediates electron transfer from ubiquinol to cytochrome c. Contributes to the generation of a proton gradient across the mitochondrial membrane that is then used for ATP synthesis. The protein is Cytochrome b (MT-CYB) of Colaptes rupicola (Southern Andean flicker).